A 181-amino-acid chain; its full sequence is Proteinase inhibitor A (181 aa).

Positions methionine 1–glycine 24 are cleaved as a signal peptide. Disulfide bonds link cysteine 67–cysteine 113, cysteine 134–cysteine 143, and cysteine 136–cysteine 139.

Belongs to the protease inhibitor I3 (leguminous Kunitz-type inhibitor) family.

The protein resides in the secreted. Its function is as follows. Possesses two reactive sites. Inhibits an equimolar amount of trypsin and chymotrypsin simultaneously, and inhibits kallikrein weakly. The polypeptide is Proteinase inhibitor A (Sagittaria sagittifolia (Arrowhead)).